We begin with the raw amino-acid sequence, 111 residues long: Nucleoid-associated protein PSEEN1789 (111 aa).

Disordered stretches follow at residues 1-25 and 89-111; these read MMKG…KMQE and NSQD…KMPF.

Belongs to the YbaB/EbfC family. As to quaternary structure, homodimer.

It localises to the cytoplasm. The protein resides in the nucleoid. Its function is as follows. Binds to DNA and alters its conformation. May be involved in regulation of gene expression, nucleoid organization and DNA protection. In Pseudomonas entomophila (strain L48), this protein is Nucleoid-associated protein PSEEN1789.